The following is a 515-amino-acid chain: Rop guanine nucleotide exchange factor 12 (515 aa).

Residues 83-446 (QARERQLLAD…RAGNKRNTPL (364 aa)) enclose the PRONE domain. The residue at position 510 (serine 510) is a Phosphoserine.

In terms of assembly, interacts (via C-terminus) with PRK2. Interacts with PRK6. In terms of tissue distribution, expressed in pollen grains.

It localises to the cytoplasm. It is found in the cell membrane. Phosphorylation at Ser-510 by PRK2 may release ROPGEF12 auto-inhibition, thereby activating ROPGEF12 and downstream Rop signaling. Functionally, guanine-nucleotide exchange factor (GEF) that acts as an activator of Rop (Rho of plants) GTPases by promoting the exchange of GDP for GTP. May be recruited by PRK2 at the plasma membrane to maintain polar Rop activity in the pollen tube and control polarized pollen tube growth. This chain is Rop guanine nucleotide exchange factor 12, found in Arabidopsis thaliana (Mouse-ear cress).